The sequence spans 633 residues: Chaperone protein dnaK2 (633 aa).

Thr-197 carries the phosphothreonine; by autocatalysis modification. Residues 513-532 are compositionally biased toward basic and acidic residues; it reads AEQNASSDKERREKIERKNQ. Disordered regions lie at residues 513–534 and 598–633; these read AEQN…NQAD and QQAG…TETK. Residues 606 to 619 are compositionally biased toward low complexity; that stretch reads PGAAPQDGGTTSSD. Residues 620–633 are compositionally biased toward acidic residues; sequence GGDDVIDADFTETK.

It belongs to the heat shock protein 70 family.

Functionally, acts as a chaperone. The protein is Chaperone protein dnaK2 (dnaK2) of Nostoc sp. (strain PCC 7120 / SAG 25.82 / UTEX 2576).